The following is a 256-amino-acid chain: Zinc metalloprotease (256 aa).

His74 serves as the catalytic Proton donor.

This sequence belongs to the peptidase M4 family. The cofactor is Zn(2+).

The protein localises to the secreted. May play a role in ulcer formation. Proteolytic digestion of gastric mucus has been suggested as an important mechanism by which its pathogenicity is at least partly exerted. This Helicobacter pylori (Campylobacter pylori) protein is Zinc metalloprotease (hap).